Consider the following 481-residue polypeptide: MSQQTTPNAPGWAPDSWRSKPIKQCPEYPDKAALEKATNELKTLPPIVLPNEIIRLREHLRDVAQGKAFLLQGGDCAELFSYCQQDVIESKIKLLLQMSLVLLWGADKPVVRIGRMAGQYAKPRSSPVETINGKEVPSFRGDILNGFHPDERELDPNRLVRAYQYSSATLNYIRGAIGSGIADLHGPLDWGLGHVRDPALKSKYQETVDRIQEMLRFMHTIGADQNEKLSTVELFTSHEGLLLEYEEPLTRLLNHPSVRSYPPDSTTPPKKEYYNTSAHFLWIGDRTRQIDHAHVEYFRGIANPIGVKIGPSTPTSDLLPMLRTLNPNREPGKVTLITRYGADKVASLLPAHIRTVESSEYARTVVWQCDPMHGNTQSVSGGIKTRKFSDIFSELQQTLRIHKEEKSYLGGMHLELTGDAVTECLGGGAGLDEDDLSTNYTSFCDPRLNEKQALELAFLVADHYRQERKEKEAERRKSSVV.

The segment at 1–22 (MSQQTTPNAPGWAPDSWRSKPI) is disordered.

This sequence belongs to the class-II DAHP synthase family. As to quaternary structure, homodimer. In terms of processing, the N-terminus is blocked.

The enzyme catalyses D-erythrose 4-phosphate + phosphoenolpyruvate + H2O = 7-phospho-2-dehydro-3-deoxy-D-arabino-heptonate + phosphate. It participates in metabolic intermediate biosynthesis; chorismate biosynthesis; chorismate from D-erythrose 4-phosphate and phosphoenolpyruvate: step 1/7. The sequence is that of Phospho-2-dehydro-3-deoxyheptonate aldolase (aro-8) from Neurospora crassa (strain ATCC 24698 / 74-OR23-1A / CBS 708.71 / DSM 1257 / FGSC 987).